A 359-amino-acid chain; its full sequence is Cytoplasmic tRNA 2-thiolation protein 2 (359 aa).

This sequence belongs to the CTU2/NCS2 family.

The protein resides in the cytoplasm. The protein operates within tRNA modification; 5-methoxycarbonylmethyl-2-thiouridine-tRNA biosynthesis. Functionally, plays a central role in 2-thiolation of mcm(5)S(2)U at tRNA wobble positions of tRNA(Lys), tRNA(Glu) and tRNA(Gln). May act by forming a heterodimer with NCS6 that ligates sulfur from thiocarboxylated URM1 onto the uridine of tRNAs at wobble position. Prior mcm(5) tRNA modification by the elongator complex is required for 2-thiolation. May also be involved in protein urmylation. The protein is Cytoplasmic tRNA 2-thiolation protein 2 of Ajellomyces capsulatus (strain NAm1 / WU24) (Darling's disease fungus).